The following is a 492-amino-acid chain: MTDLHRLSVRELAEGLGQAQFSSRELTQHYLNRIDKIDAQVKSYVTVTHEQALAQADAADALRQAGNAGFLTGVPLAHKDIFCTKGIKTTAGSKMLDNFISPYNATVVEKANAAGLVTLGKLNMDEFAMGSTSESSYFGATCNPWALDRVPGGSSGGSAAAVAADLAPFATGTDTGGSIRQPASFCGLTGLKPTYGRVSRFGMIAYASSLDQGGPMARSAEDCAYLMNVMAGHDAKDSTSVKKDVDDYVANLNATALKGLRIGIPKQYFNVAGLDAEVKARVEESLKKLEEMGAVLVEIDLSMTESYVPTYYLIAPAEASSNLSRYDGVRYGYRCENPVDLMDLYKRSRSEGFGAEVQRRILIGTYALSAGYYDAYYVKAQKVRRLIQQDFLKAFENVDVIAAPSAPTTAYKIGADLTPVEMYLGDIYTLAVNLAGLPAINAPVGLDSNNLPVGLQLIGNYWSESQLLSIVHQYQQDTTFHTQRAAIAEENA.

Residues Lys79 and Ser154 each act as charge relay system in the active site. Catalysis depends on Ser178, which acts as the Acyl-ester intermediate.

Belongs to the amidase family. GatA subfamily. In terms of assembly, heterotrimer of A, B and C subunits.

It carries out the reaction L-glutamyl-tRNA(Gln) + L-glutamine + ATP + H2O = L-glutaminyl-tRNA(Gln) + L-glutamate + ADP + phosphate + H(+). Allows the formation of correctly charged Gln-tRNA(Gln) through the transamidation of misacylated Glu-tRNA(Gln) in organisms which lack glutaminyl-tRNA synthetase. The reaction takes place in the presence of glutamine and ATP through an activated gamma-phospho-Glu-tRNA(Gln). This is Glutamyl-tRNA(Gln) amidotransferase subunit A from Acinetobacter baylyi (strain ATCC 33305 / BD413 / ADP1).